The primary structure comprises 349 residues: Histidinol-phosphate aminotransferase 1 (349 aa).

Residue Lys213 is modified to N6-(pyridoxal phosphate)lysine.

The protein belongs to the class-II pyridoxal-phosphate-dependent aminotransferase family. Histidinol-phosphate aminotransferase subfamily. As to quaternary structure, homodimer. Pyridoxal 5'-phosphate serves as cofactor.

It catalyses the reaction L-histidinol phosphate + 2-oxoglutarate = 3-(imidazol-4-yl)-2-oxopropyl phosphate + L-glutamate. The protein operates within amino-acid biosynthesis; L-histidine biosynthesis; L-histidine from 5-phospho-alpha-D-ribose 1-diphosphate: step 7/9. The sequence is that of Histidinol-phosphate aminotransferase 1 from Carboxydothermus hydrogenoformans (strain ATCC BAA-161 / DSM 6008 / Z-2901).